The following is a 68-amino-acid chain: Conotoxin Vx2 (68 aa).

Residues 1–20 (MMSKLGVLVTICLLLFPLTA) form the signal peptide. The propeptide occupies 21 to 47 (LPLDGDQPADHPAKRTQDHNLASPISA). 3 cysteine pairs are disulfide-bonded: C55–C68, C56–C61, and C57–C65.

The protein belongs to the conotoxin M superfamily. In terms of tissue distribution, expressed by the venom duct.

It localises to the secreted. In vivo, elicits a series of symptoms, such as being sedative, tail stiffening and twisted jumping, when injected intracranially into mice. This Conus vexillum (Flag cone) protein is Conotoxin Vx2.